A 163-amino-acid chain; its full sequence is Putative H/ACA ribonucleoprotein complex subunit 2-like protein (163 aa).

Residues 1 to 27 (MGKRNLDETMNESTVSEANGDATAPTT) are disordered.

It belongs to the eukaryotic ribosomal protein eL8 family. As to quaternary structure, component of the small nucleolar ribonucleoprotein particle containing H/ACA-type snoRNAs (H/ACA snoRNPs).

The protein localises to the nucleus. Its subcellular location is the nucleolus. In terms of biological role, required for ribosome biogenesis. Part of a complex which catalyzes pseudouridylation of rRNA. This involves the isomerization of uridine such that the ribose is subsequently attached to C5, instead of the normal N1. Pseudouridine ('psi') residues may serve to stabilize the conformation of rRNAs. This chain is Putative H/ACA ribonucleoprotein complex subunit 2-like protein, found in Caenorhabditis elegans.